A 714-amino-acid chain; its full sequence is Testis-expressed protein 13D (714 aa).

2 disordered regions span residues 300 to 419 and 431 to 675; these read GSFP…GCSD and RRCK…PASF. 2 stretches are compositionally biased toward basic and acidic residues: residues 307–320 and 366–378; these read SRSH…ERSQ and GNRE…EGPK. Positions 379-392 are enriched in basic residues; the sequence is RARRMHTLVFRRSH. The span at 403 to 416 shows a compositional bias: polar residues; sequence TVPQGDSRSYSQEG. 3 stretches are compositionally biased toward basic and acidic residues: residues 495 to 505, 557 to 567, and 636 to 646; these read CKPEEGPERPQ and SRSHGVRESPK. A RanBP2-type zinc finger spans residues 677–706; sequence VPVNWKCPWCKAINFSWRTACYKCKKACVP.

This sequence belongs to the TEX13 family.

The protein is Testis-expressed protein 13D of Homo sapiens (Human).